Consider the following 460-residue polypeptide: Ammonium transporter Rh type C (460 aa).

At 1 to 9 the chain is on the cytoplasmic side; that stretch reads MAWNTNLRW. The chain crosses the membrane as a helical span at residues 10–30; the sequence is RLPLTCLLLQVIMVILFGVFV. Topologically, residues 31–61 are extracellular; that stretch reads RYDPDADAHWIDERLGRNISSDMDNEFYYRY. Residue Asn48 is glycosylated (N-linked (GlcNAc...) asparagine). Residues 62 to 82 form a helical membrane-spanning segment; that stretch reads PSFQDVHVMIFVGFGFLMTFL. At 83 to 86 the chain is on the cytoplasmic side; that stretch reads QRYG. The helical transmembrane segment at 87–107 threads the bilayer; the sequence is FSSVGFNFLLAAFGIQWALLM. At 108 to 125 the chain is on the extracellular side; that stretch reads QGWLHSFHSGYIVLGVEN. A helical membrane pass occupies residues 126–145; sequence LINADFCVGSVCVAFGAVLG. Residues 146 to 151 lie on the Cytoplasmic side of the membrane; the sequence is KVSPVQ. Residues 152–174 traverse the membrane as a helical segment; the sequence is LLIMTLFQVTLFSVNEFILLNLL. Residues 175-179 lie on the Extracellular side of the membrane; it reads EVKDA. Residues 180 to 200 form a helical membrane-spanning segment; the sequence is GGSMTIHTFGAYFGLTVTWIL. Residues 201-219 lie on the Cytoplasmic side of the membrane; it reads YRPNLYQSKERQSSVYHSD. A helical membrane pass occupies residues 220–240; the sequence is LFAMIGTLFLWMYWPSFNSAV. The Extracellular segment spans residues 241–251; that stretch reads SHHGDAQHRAA. Residues 252 to 272 form a helical membrane-spanning segment; the sequence is INTYCSLAACVLTSVALSSAL. Residues 273-285 are Cytoplasmic-facing; sequence HKKGKLDMVHIQN. The chain crosses the membrane as a helical span at residues 286 to 306; the sequence is ATLAGGVAVGTAAEMMLMPYG. A topological domain (extracellular) is located at residue Ser307. Residues 308–328 traverse the membrane as a helical segment; that stretch reads LIVGFICGIISTLGFVYLTPF. The Cytoplasmic segment spans residues 329–340; sequence LESRLRIQDTCG. A helical transmembrane segment spans residues 341-361; sequence IHNLHGMPGIIGGIVGAVTAA. Residues 362 to 396 are Extracellular-facing; the sequence is SANTQQYGQKGLAHAFDIDATKTTWTASMQGSFQA. The chain crosses the membrane as a helical span at residues 397 to 417; that stretch reads AGLFVSLAMALVGGLIVGVIL. Topologically, residues 418–460 are cytoplasmic; the sequence is KLPFWGQPADENCFEDAIYWEIPEDQKSLVSRSEDPTLRPTEP.

Belongs to the ammonium transporter (TC 2.A.49) family. Rh subfamily. As to quaternary structure, homotrimer. N-glycosylated.

The protein localises to the cell membrane. It localises to the apical cell membrane. The catalysed reaction is NH4(+)(in) = NH4(+)(out). The enzyme catalyses methylamine(out) = methylamine(in). It catalyses the reaction CO2(out) = CO2(in). Functionally, ammonium transporter involved in the maintenance of acid-base homeostasis. Transports ammonium and its related derivative methylammonium across the plasma membrane of epithelial cells likely contributing to renal transepithelial ammonia transport and ammonia metabolism. Postulated to primarily mediate an electroneutral bidirectional transport of NH3 ammonia species according to a mechanism that implies interaction of an NH4(+) ion with acidic residues of the pore entry followed by dissociation of NH4(+) into NH3 and H(+). As a result NH3 transits through the central pore and is protonated on the extracellular side reforming NH4(+). May act as a CO2 channel providing for renal acid secretion. This Sus scrofa (Pig) protein is Ammonium transporter Rh type C (RHCG).